The chain runs to 63 residues: 2-hydroxymuconate tautomerase (63 aa).

The active-site Proton acceptor; via imino nitrogen is the proline 2.

This sequence belongs to the 4-oxalocrotonate tautomerase family. In terms of assembly, homohexamer.

The enzyme catalyses (2Z,4E)-2-hydroxyhexa-2,4-dienedioate = (3E)-2-oxohex-3-enedioate. It functions in the pathway xenobiotic degradation; toluene degradation. Its pathway is xenobiotic degradation; xylene degradation. Functionally, catalyzes the ketonization of 2-hydroxymuconate stereoselectively to yield 2-oxo-3-hexenedioate. This Pseudomonas putida (Arthrobacter siderocapsulatus) protein is 2-hydroxymuconate tautomerase (xylH).